A 350-amino-acid polypeptide reads, in one-letter code: Phosphoribosylformylglycinamidine cyclo-ligase (350 aa).

Belongs to the AIR synthase family.

The protein resides in the cytoplasm. The enzyme catalyses 2-formamido-N(1)-(5-O-phospho-beta-D-ribosyl)acetamidine + ATP = 5-amino-1-(5-phospho-beta-D-ribosyl)imidazole + ADP + phosphate + H(+). It participates in purine metabolism; IMP biosynthesis via de novo pathway; 5-amino-1-(5-phospho-D-ribosyl)imidazole from N(2)-formyl-N(1)-(5-phospho-D-ribosyl)glycinamide: step 2/2. The polypeptide is Phosphoribosylformylglycinamidine cyclo-ligase (Syntrophotalea carbinolica (strain DSM 2380 / NBRC 103641 / GraBd1) (Pelobacter carbinolicus)).